The sequence spans 464 residues: L-cysteine:1D-myo-inositol 2-amino-2-deoxy-alpha-D-glucopyranoside ligase (464 aa).

Cysteine 67 provides a ligand contact to Zn(2+). L-cysteinyl-5'-AMP contacts are provided by residues 67–70 (CGIT), threonine 82, and 105–107 (NVT). A 'HIGH' region motif is present at residues 69–79 (ITPYDATHLGH). The 'ERGGDP' region motif lies at 207–212 (ERGGDP). Tryptophan 247 lines the L-cysteinyl-5'-AMP pocket. Cysteine 251 is a binding site for Zn(2+). L-cysteinyl-5'-AMP is bound at residue 269–271 (GTD). Histidine 276 is a Zn(2+) binding site. An L-cysteinyl-5'-AMP-binding site is contributed by valine 303. Residues 309-313 (KMSKS) carry the 'KMSKS' region motif. The tract at residues 410 to 435 (AGGSAGAGPDPTHQGGPVRGSGGDVP) is disordered.

The protein belongs to the class-I aminoacyl-tRNA synthetase family. MshC subfamily. Monomer. Requires Zn(2+) as cofactor.

It carries out the reaction 1D-myo-inositol 2-amino-2-deoxy-alpha-D-glucopyranoside + L-cysteine + ATP = 1D-myo-inositol 2-(L-cysteinylamino)-2-deoxy-alpha-D-glucopyranoside + AMP + diphosphate + H(+). Functionally, catalyzes the ATP-dependent condensation of GlcN-Ins and L-cysteine to form L-Cys-GlcN-Ins. The protein is L-cysteine:1D-myo-inositol 2-amino-2-deoxy-alpha-D-glucopyranoside ligase of Frankia casuarinae (strain DSM 45818 / CECT 9043 / HFP020203 / CcI3).